We begin with the raw amino-acid sequence, 570 residues long: Methionine--tRNA ligase (570 aa).

Residues 11-21 (PYVQTVPHLGN) carry the 'HIGH' region motif. C143, C146, C156, and C159 together coordinate Zn(2+). The short motif at 333 to 337 (KFSKS) is the 'KMSKS' region element. Position 336 (K336) interacts with ATP.

It belongs to the class-I aminoacyl-tRNA synthetase family. MetG type 1 subfamily. Zn(2+) serves as cofactor.

It is found in the cytoplasm. It catalyses the reaction tRNA(Met) + L-methionine + ATP = L-methionyl-tRNA(Met) + AMP + diphosphate. Functionally, is required not only for elongation of protein synthesis but also for the initiation of all mRNA translation through initiator tRNA(fMet) aminoacylation. The chain is Methionine--tRNA ligase from Pyrobaculum calidifontis (strain DSM 21063 / JCM 11548 / VA1).